Here is a 261-residue protein sequence, read N- to C-terminus: Probable electron transfer flavoprotein subunit beta (261 aa).

Ser-2 is subject to N-acetylserine.

It belongs to the ETF beta-subunit/FixA family. Heterodimer of an alpha and a beta subunit. Interacts with YFH1. FAD is required as a cofactor. The cofactor is AMP.

Its subcellular location is the mitochondrion matrix. In terms of biological role, the electron transfer flavoprotein serves as a specific electron acceptor for several dehydrogenases, including five acyl-CoA dehydrogenases, glutaryl-CoA and sarcosine dehydrogenase. It transfers the electrons to the main mitochondrial respiratory chain via ETF-ubiquinone oxidoreductase (ETF dehydrogenase). The protein is Probable electron transfer flavoprotein subunit beta (CIR1) of Saccharomyces cerevisiae (strain ATCC 204508 / S288c) (Baker's yeast).